The primary structure comprises 518 residues: Endoglucanase 18 (518 aa).

Over 1–35 the chain is Cytoplasmic; it reads MANCVRCCCWLLVLMLMALAITAAVVFVRYKNGEG. Residues 36–56 form a helical membrane-spanning segment; that stretch reads VFPFPGVPGAVDHKYADALAV. Topologically, residues 57–518 are extracellular; that stretch reads ALQFFQVQKS…STSSLARSLS (462 aa). N-linked (GlcNAc...) asparagine glycosylation occurs at Asn71. Asp101 serves as the catalytic Nucleophile. Residues Asn214, Asn251, and Asn272 are each glycosylated (N-linked (GlcNAc...) asparagine). Residue His436 is part of the active site. The N-linked (GlcNAc...) asparagine glycan is linked to Asn477. Residues Asp482 and Glu491 contribute to the active site.

Belongs to the glycosyl hydrolase 9 (cellulase E) family.

The protein localises to the membrane. It catalyses the reaction Endohydrolysis of (1-&gt;4)-beta-D-glucosidic linkages in cellulose, lichenin and cereal beta-D-glucans.. The protein is Endoglucanase 18 of Oryza sativa subsp. japonica (Rice).